Reading from the N-terminus, the 124-residue chain is Heat-labile enterotoxin B chain (124 aa).

Residues 1–21 form the signal peptide; the sequence is MNKVKCYVLFTALLSSLYAHG. Cysteine 30 and cysteine 107 form a disulfide bridge.

As to quaternary structure, heterohexamer of one A chain and of five B chains.

Its function is as follows. The biological activity of the toxin is produced by the A chain, which activates intracellular adenyl cyclase. The chain is Heat-labile enterotoxin B chain (eltB) from Escherichia coli.